The following is a 196-amino-acid chain: Pyridoxal 5'-phosphate synthase subunit PdxT (196 aa).

Residue 52-54 coordinates L-glutamine; sequence GES. Cys84 serves as the catalytic Nucleophile. Residues Arg113 and 141–142 contribute to the L-glutamine site; that span reads IR. Active-site charge relay system residues include His178 and Glu180.

Belongs to the glutaminase PdxT/SNO family. As to quaternary structure, in the presence of PdxS, forms a dodecamer of heterodimers. Only shows activity in the heterodimer.

It catalyses the reaction aldehydo-D-ribose 5-phosphate + D-glyceraldehyde 3-phosphate + L-glutamine = pyridoxal 5'-phosphate + L-glutamate + phosphate + 3 H2O + H(+). The enzyme catalyses L-glutamine + H2O = L-glutamate + NH4(+). It participates in cofactor biosynthesis; pyridoxal 5'-phosphate biosynthesis. Its function is as follows. Catalyzes the hydrolysis of glutamine to glutamate and ammonia as part of the biosynthesis of pyridoxal 5'-phosphate. The resulting ammonia molecule is channeled to the active site of PdxS. The polypeptide is Pyridoxal 5'-phosphate synthase subunit PdxT (Pyrococcus horikoshii (strain ATCC 700860 / DSM 12428 / JCM 9974 / NBRC 100139 / OT-3)).